The primary structure comprises 301 residues: MTMPSTQFHTTILEQFSLFLSVDRGLCQQSIAAYRQDISSFLTISAISSPQDISQNSVYIFAEELYRRKEAETTLARRLIALKVFFLFLKDQQLLPYPPIIEHPKIWKRLPSVLTPQEVDALLAVPLQMEKNPRHLAFRDTAILHTLYSTGVRVSELCDLRLGHVSDDCIRVTGKGSKTRLVPLGSRAREAIDAYLCPFRDQYQKKNPHEDHLFLSTRGHKLERSCVWRRIHNYAKQVTSKPVSPHSLRHAFATHLLDNKADLRVIQEMLGHARIASTEVYTHVAADSLIEKFLAHHPRNL.

Residues 7–90 form the Core-binding (CB) domain; that stretch reads QFHTTILEQF…ALKVFFLFLK (84 aa). Positions 109–294 constitute a Tyr recombinase domain; it reads RLPSVLTPQE…AADSLIEKFL (186 aa). Active-site residues include arginine 153, lysine 175, histidine 246, arginine 249, and histidine 272. The O-(3'-phospho-DNA)-tyrosine intermediate role is filled by tyrosine 281.

The protein belongs to the 'phage' integrase family. XerD subfamily. In terms of assembly, forms a cyclic heterotetrameric complex composed of two molecules of XerC and two molecules of XerD.

It is found in the cytoplasm. Functionally, site-specific tyrosine recombinase, which acts by catalyzing the cutting and rejoining of the recombining DNA molecules. The XerC-XerD complex is essential to convert dimers of the bacterial chromosome into monomers to permit their segregation at cell division. It also contributes to the segregational stability of plasmids. The chain is Tyrosine recombinase XerD from Chlamydia pneumoniae (Chlamydophila pneumoniae).